We begin with the raw amino-acid sequence, 942 residues long: MKIKILSAMVASSLLIGCVIPTVKASQSAIKSIETNRTITKVRTGMLSGGSSIITTSYEGTVAAYKFNGEKLWENELSGFMNHDIWVQDINGDGLVEIFAANADGNVYCINSDGSLKWTFGLNEVPMNSVTVISDADKKYVVAGGYDKNLYYISTNGELLKTIESGTYSEEGVFGDGVKPEARTHTVNFVRPVKSSDGTEKLVVLGTNNSLQSSGRFYIFEPFADLPSEKSRISIKKGIGDLRTVDFDNDGNDELTLGNSAQIGDAAISVMNLDDLSQKKSQINDIARRIDRFGYRVAQTEVVMNEGTPTYLTLFGSRILLTPESFDVNDSEILANKYSYYDMWKDKSSNKLVLASAQSGGSQVHIIDTSNPSWKSAYEELEPQGKLAAIQENTRAIERQLSNFQKPTRERAPLPVYFISESRNEIPTTIERSEFLYDSPVFLNYSTLPNVENWDRSEVLADNPKYRDKRDRRKNYTLSSEEMFNKLSAGYDNSDGISQWAGHGNDPYMISLATMKRIISSGDGKKTVNIYPEIEGHGDAFNKVLSDHFYPLAEFSSENNANLFMRNKHTFWQSTIYAPEWSELRSGRLADAFVPAMEETTDKSMEMSVAGRMGLWAAGSVDNWGERYARDNPSFDRLRQHSHQMVPNHALRQIIYKIASGARYINNFGFNQEYMSLAWELIGKGALYVPKREELLSLSPVHISMKEPDPIYRETSNNVKWTTFYDEEKDSIPYVFSRLNGTWPGAKTLPWDYSNYAADTKERRLDFIPKFPKGLVLITPVQQGKFKDEGTVRGTLADNMHPIYKDIMKEYITDGKNYYNPNGEQVMAADSVRYRQIKNKIEEKSNLLPMTVSGEAAWVVAQSAEKHLRLTLVDSGYLNPSNKVAKVKFNSVTPVAIVDVLSGETFSPDSNGVVEIPVLAGAFRFIDVKITEDLRNMQSSTL.

Residues 1–25 (MKIKILSAMVASSLLIGCVIPTVKA) form the signal peptide.

Monomer.

Its subcellular location is the secreted. It catalyses the reaction Endohydrolysis of (1-&gt;4)-beta-linkages in the backbone of lambda-carrageenan, resulting in the tetrasaccharide alpha-D-Galp2,6S2-(1-&gt;3)-beta-D-Galp2S-(1-&gt;4)-alpha-D-Galp2,6S2-(1-&gt;3)-D-Galp2S.. Its function is as follows. Hydrolyzes lambda-carrageenan with inversion of anomeric configuration. Does not hydrolyze iota- and kappa-carrageenans, agarose or porphyran. This Pseudoalteromonas carrageenovora (Alteromonas carrageenovora) protein is Lambda-carrageenase.